Reading from the N-terminus, the 355-residue chain is MHC class I-like protein MILL2 (355 aa).

The signal sequence occupies residues 1-29 (MKASSGKPREFRPAVLLLILGLLLRDSRG). Residues 46–137 (RLTRTHTLRY…VINQKSQEEG (92 aa)) are alpha-1. 3 cysteine pairs are disulfide-bonded: Cys-96–Cys-107, Cys-147–Cys-210, and Cys-249–Cys-306. N-linked (GlcNAc...) asparagine glycosylation is found at Asn-104 and Asn-152. The segment at 138–229 (LHTLQATLGC…SLRNGLQDTG (92 aa)) is alpha-2. An alpha-3 region spans residues 230-323 (PPMVTVTCRN…SIMQTAVSGH (94 aa)). In terms of domain architecture, Ig-like C1-type spans 231 to 321 (PMVTVTCRNY…NHSIMQTAVS (91 aa)). Asn-312 carries N-linked (GlcNAc...) asparagine glycosylation. The connecting peptide stretch occupies residues 324–329 (AAEDSQ). The GPI-anchor amidated aspartate moiety is linked to residue Asp-330. Residues 331 to 355 (VASSATASAGSALPVVLAVALARAN) constitute a propeptide, removed in mature form.

The protein belongs to the MHC class I family. In terms of assembly, heterodimer with B2M (beta-2-microglobulin). In terms of processing, N-glycosylated. As to expression, ubiquitously expressed in neonatal and adult tissues.

It is found in the cell membrane. Binds to heparan sulfate proteoglycans on the surface of fibroblast (NIH-3T3) cells. The protein is MHC class I-like protein MILL2 of Mus musculus (Mouse).